Here is a 276-residue protein sequence, read N- to C-terminus: Undecaprenyl-diphosphatase (276 aa).

8 consecutive transmembrane segments (helical) span residues 2–22 (LEIL…FLPI), 43–63 (FIDM…VVLY), 83–103 (WTLW…GLPL), 111–131 (LMNW…FIVI), 147–167 (TLPY…LIPG), 186–206 (YVAA…ASLL), 224–244 (LILA…IRFL), and 255–275 (AFGW…ALLA).

Belongs to the UppP family.

It is found in the cell membrane. It catalyses the reaction di-trans,octa-cis-undecaprenyl diphosphate + H2O = di-trans,octa-cis-undecaprenyl phosphate + phosphate + H(+). Catalyzes the dephosphorylation of undecaprenyl diphosphate (UPP). Confers resistance to bacitracin. This chain is Undecaprenyl-diphosphatase, found in Limosilactobacillus fermentum (strain NBRC 3956 / LMG 18251) (Lactobacillus fermentum).